A 130-amino-acid chain; its full sequence is MIGNWNYGTGRRKSAVARVFIKAGKGDIVVNGKPISDYFSRETSLMIVRQPLELTNHAQTFDIKVNVSGGGETGQAGAVRHGITRALIDYDATLKPALSKAGFVTRDAREVERKKVGLHKARRAKQFSKR.

It belongs to the universal ribosomal protein uS9 family.

The polypeptide is Small ribosomal subunit protein uS9 (Burkholderia pseudomallei (strain K96243)).